A 246-amino-acid polypeptide reads, in one-letter code: Uridylate kinase (246 aa).

Residue 20–23 (KISG) coordinates ATP. The segment at 28-33 (GDQGYG) is involved in allosteric activation by GTP. Residue Gly62 participates in UMP binding. 2 residues coordinate ATP: Gly63 and Arg67. UMP-binding positions include Asp82 and 143–150 (TGNPYFTT). Residues Thr170, Tyr176, and Asp179 each contribute to the ATP site.

Belongs to the UMP kinase family. As to quaternary structure, homohexamer.

It localises to the cytoplasm. The catalysed reaction is UMP + ATP = UDP + ADP. It functions in the pathway pyrimidine metabolism; CTP biosynthesis via de novo pathway; UDP from UMP (UMPK route): step 1/1. Allosterically activated by GTP. Inhibited by UTP. Functionally, catalyzes the reversible phosphorylation of UMP to UDP. The sequence is that of Uridylate kinase from Cereibacter sphaeroides (strain ATCC 17029 / ATH 2.4.9) (Rhodobacter sphaeroides).